Here is a 2527-residue protein sequence, read N- to C-terminus: Leucine-rich repeat serine/threonine-protein kinase 2 (2527 aa).

The required for RAB29-mediated activation stretch occupies residues 1-969 (MASGSCQGCE…RSSKLQSHMR (969 aa)). Residues 319–348 (LTETIFLNQDLEEKNENQENDDEGEEDKLF) are a coiled coil. Phosphoserine is present on residues Ser-910, Ser-935, Ser-955, and Ser-973. LRR repeat units lie at residues 983-1004 (YITSLDLSANELRDIDALSQKC), 1012-1033 (HLEKLELHQNALTSFPQQLCET), 1036-1057 (SLTHLDLHSNKFTSFPSYLLKM), 1059-1080 (CIANLDVSRNDIGPSVVLDPTV), 1084-1105 (TLKQFNLSYNQLSFVPENLTDV), 1108-1129 (KLEQLILEGNKISGICSPLRLK), 1130-1150 (ELKILNLSKNHISSLSENFLE), 1156-1171 (ESFSARMNFLAAMPFL), 1174-1196 (SMTILKLSQNKFSCIPEAILNLP), 1197-1218 (HLRSLDMSSNDIQYLPGPAHWK), 1221-1245 (NLRELLFSHNQISILDLSEKAYLWS), 1246-1267 (RVEKLHLSHNKLKEIPPEIGCL), and 1269-1291 (NLTSLDVSYNLELRSFPNEMGKL). At Ser-1292 the chain carries Phosphoserine; by autocatalysis. The Roc domain occupies 1328–1511 (KAVPYNRMKL…KTIINESLNF (184 aa)). 1341–1348 (GNTGSGKT) contacts GTP. Ser-1444 is subject to Phosphoserine. The COR domain occupies 1546–1740 (PVIDRKRLLQ…RMYWRQGIYL (195 aa)). Residues 1879-2138 (QAPEFLLGDG…FDILNSAELV (260 aa)) form the Protein kinase domain. ATP-binding residues include Leu-1885, Asp-1887, Gly-1888, Gly-1891, Val-1893, Ala-1904, Lys-1906, Met-1947, Glu-1948, Ala-1950, Ser-1954, and Arg-1957. Residue Asp-1994 is the Proton acceptor of the active site. ATP-binding residues include His-1998, Leu-2001, Ala-2016, and Asp-2017. 2098–2121 (EYGCAPWPMVEKLIKQCLKENPQE) contributes to the GTP binding site. WD repeat units follow at residues 2139–2183 (CLTR…SFLD), 2188–2228 (GYTS…LVIN), 2233–2276 (KKRH…AIFE), 2281–2327 (KLKG…FSFS), 2333–2377 (QKLI…EVWD), 2402–2438 (KESKHKMSYSGRVKTLCLQKNTALWIGTGGGHILLLD), and 2443–2497 (RLIR…TVWD). GTP is bound at residue 2295–2298 (NVST).

Belongs to the protein kinase superfamily. TKL Ser/Thr protein kinase family. Homodimer. Homotetramer; when activated by GTP-bound RAB29. Interacts with PRKN, PRDX3, and TPCN2. Interacts with VPS35. Interacts (via N-terminus) with RAB29; this interaction is direct and stimulates kinase activity. Interacts (via ROC domain) with SEC16A. Interacts with APP; interaction promotes phosphorylation of 'Thr-743' of APP. Interacts with MAPT. Interacts with RAB8A, RAB10, and RAB12. Interacts (via N-terminus) with RAB32. Interacts with YWHAG; this interaction is dependent on phosphorylation of Ser-910 and either Ser-935 or Ser-1444. Interacts with SFN; this interaction is dependent on phosphorylation of Ser-910 and/or Ser-935. Requires Mg(2+) as cofactor. Autophosphorylated at Ser-1292; autophosphorylation is stimulated by RAB29. Phosphorylation of Ser-910 and either Ser-935 or Ser-1444 facilitates interaction with YWHAG. Phosphorylation of Ser-910 and/or Ser-935 facilitates interaction with SFN. Post-translationally, ubiquitinated by TRIM1; undergoes 'Lys-48'-linked polyubiquitination leading to proteasomal degradation. Expressed in pyramidal neurons in all cortical laminae of the visual cortex, in neurons of the substantia nigra pars compacta and caudate putamen (at protein level). Expressed in neutrophils (at protein level). Expressed in the brain. Expressed throughout the adult brain, but at a lower level than in heart and liver. Also expressed in placenta, lung, skeletal muscle, kidney and pancreas. In the brain, expressed in the cerebellum, cerebral cortex, medulla, spinal cord occipital pole, frontal lobe, temporal lobe and putamen. Expression is particularly high in brain dopaminoceptive areas.

Its subcellular location is the cytoplasmic vesicle. It is found in the perikaryon. It localises to the golgi apparatus membrane. The protein resides in the cell projection. The protein localises to the axon. Its subcellular location is the dendrite. It is found in the endoplasmic reticulum membrane. It localises to the secretory vesicle. The protein resides in the synaptic vesicle membrane. The protein localises to the endosome. Its subcellular location is the lysosome. It is found in the mitochondrion outer membrane. It localises to the cytoplasm. The protein resides in the cytoskeleton. The protein localises to the phagosome. It catalyses the reaction L-threonyl-[protein] + ATP = O-phospho-L-threonyl-[protein] + ADP + H(+). The enzyme catalyses L-seryl-[protein] + ATP = O-phospho-L-seryl-[protein] + ADP + H(+). The catalysed reaction is GTP + H2O = GDP + phosphate + H(+). With respect to regulation, kinase activity is regulated by the GTPase activity of the ROC domain. GTP-bound LRRK2 kinase activity is stimulated by RAB29. Phosphorylation of RAB10 'Thr-73' is stimulated by RAB29 and RAB32. Inhibited by small molecule inhibitor MLi-2. Functionally, serine/threonine-protein kinase which phosphorylates a broad range of proteins involved in multiple processes such as neuronal plasticity, innate immunity, autophagy, and vesicle trafficking. Is a key regulator of RAB GTPases by regulating the GTP/GDP exchange and interaction partners of RABs through phosphorylation. Phosphorylates RAB3A, RAB3B, RAB3C, RAB3D, RAB5A, RAB5B, RAB5C, RAB8A, RAB8B, RAB10, RAB12, RAB29, RAB35, and RAB43. Regulates the RAB3IP-catalyzed GDP/GTP exchange for RAB8A through the phosphorylation of 'Thr-72' on RAB8A. Inhibits the interaction between RAB8A and GDI1 and/or GDI2 by phosphorylating 'Thr-72' on RAB8A. Regulates primary ciliogenesis through phosphorylation of RAB8A and RAB10, which promotes SHH signaling in the brain. Together with RAB29, plays a role in the retrograde trafficking pathway for recycling proteins, such as mannose-6-phosphate receptor (M6PR), between lysosomes and the Golgi apparatus in a retromer-dependent manner. Regulates neuronal process morphology in the intact central nervous system (CNS). Plays a role in synaptic vesicle trafficking. Plays an important role in recruiting SEC16A to endoplasmic reticulum exit sites (ERES) and in regulating ER to Golgi vesicle-mediated transport and ERES organization. Positively regulates autophagy through a calcium-dependent activation of the CaMKK/AMPK signaling pathway. The process involves activation of nicotinic acid adenine dinucleotide phosphate (NAADP) receptors, increase in lysosomal pH, and calcium release from lysosomes. Phosphorylates PRDX3. By phosphorylating APP on 'Thr-743', which promotes the production and the nuclear translocation of the APP intracellular domain (AICD), regulates dopaminergic neuron apoptosis. Acts as a positive regulator of innate immunity by mediating phosphorylation of RIPK2 downstream of NOD1 and NOD2, thereby enhancing RIPK2 activation. Independent of its kinase activity, inhibits the proteasomal degradation of MAPT, thus promoting MAPT oligomerization and secretion. In addition, has GTPase activity via its Roc domain which regulates LRRK2 kinase activity. Recruited by RAB29/RAB7L1 to overloaded lysosomes where it phosphorylates and stabilizes RAB8A and RAB10 which promote lysosomal content release and suppress lysosomal enlargement through the EHBP1 and EHBP1L1 effector proteins. This Homo sapiens (Human) protein is Leucine-rich repeat serine/threonine-protein kinase 2 (LRRK2).